Here is a 72-residue protein sequence, read N- to C-terminus: ATP synthase subunit L (72 aa).

In terms of assembly, F-type ATP synthases have 2 components, the catalytic core F(1) and the membrane-embedded component F(0), linked together by a central stalk and a peripheral stalk. The central stalk, also called rotor shaft, is often seen as part of F(1). The peripheral stalk is seen as part of F(0). F(0) contains the membrane channel next to the rotor. F-type ATP synthases form dimers but each monomer functions independently in ATP generation. The dimer consists of 18 different polypeptides: ATP1 (subunit alpha, part of F(1), 3 molecules per monomer), ATP2 (subunit beta, part of F(1), 3 molecules per monomer), ATP3 (subunit gamma, part of the central stalk), ATP4 (subunit b, part of the peripheral stalk), ATP5/OSCP (subunit 5/OSCP, part of the peripheral stalk), ATP6 (subunit a, part of the peripheral stalk), ATP7 (subunit d, part of the peripheral stalk), ATP8 (subunit 8, part of the peripheral stalk), OLI1 (subunit c, part of the rotor, 10 molecules per monomer), ATP14 (subunit h, part of the peripheral stalk), ATP15 (subunit epsilon, part of the central stalk), ATP16 (subunit delta, part of the central stalk), ATP17 (subunit f, part of the peripheral stalk), ATP18 (subunit i/j, part of the peripheral stalk). Dimer-specific subunits are ATP19 (subunit k, at interface between monomers), ATP20 (subunit g, at interface between monomers), TIM11 (subunit e, at interface between monomers). Also contains subunit L.

The protein resides in the mitochondrion inner membrane. In terms of biological role, mitochondrial membrane ATP synthase (F(1)F(0) ATP synthase or Complex V) produces ATP from ADP in the presence of a proton gradient across the membrane which is generated by electron transport complexes of the respiratory chain. F-type ATP synthases consist of two structural domains, F(1) - containing the extramembraneous catalytic core, and F(0) - containing the membrane proton channel, linked together by a central stalk and a peripheral stalk. During catalysis, ATP synthesis in the catalytic domain of F(1) is coupled via a rotary mechanism of the central stalk subunits to proton translocation. The protein is ATP synthase subunit L of Pichia angusta (Yeast).